The primary structure comprises 374 residues: Mitochondrial inner membrane protein oxa1-1 (374 aa).

A helical membrane pass occupies residues 77–97 (TINVYAGAPWWVSIILTTLGV). Over 98–159 (RLALTPVMIA…GIYLKHNVNP (62 aa)) the chain is Mitochondrial intermembrane. A helical membrane pass occupies residues 160–180 (FAIFILPLTQSAVFFSFFYAI). Over 181–242 (RKMSRLSVDG…TIGNSTNWRT (62 aa)) the chain is Mitochondrial matrix. Residues 243–263 (FFFLCCLLSPLLTAKLPAAIF) form a helical membrane-spanning segment. The Mitochondrial intermembrane portion of the chain corresponds to 264–374 (MYWIPSSLFN…SKKNSKKQSN (111 aa)).

It belongs to the OXA1/ALB3/YidC family.

The protein localises to the mitochondrion inner membrane. Functionally, required for the insertion of integral membrane proteins into the mitochondrial inner membrane. Essential for the activity and assembly of cytochrome c oxidase. Not essential for viability, while oxa102 is essential. When both genes are deleted the cell is non-viable, suggesting that oxa101 act as a back-up for oxa102. In Schizosaccharomyces pombe (strain 972 / ATCC 24843) (Fission yeast), this protein is Mitochondrial inner membrane protein oxa1-1 (oxa101).